The following is a 229-amino-acid chain: Golgi to ER traffic protein 1 (229 aa).

Residues 1 to 14 (MGILAALDLHPYTL) lie on the Lumenal side of the membrane. The helical transmembrane segment at 15–34 (VVSSFTVLLIQQLVGFIGKS) threads the bilayer. At 35 to 122 (TIQEFAWLFY…KINSLVGVVL (88 aa)) the chain is on the cytoplasmic side. A coiled-coil region spans residues 60-117 (HTKKQEELHKLNREKRSISAQDEYAKWTKLNRQAEKLTAEVKSLSDDIAKDKSKINSL). A helical transmembrane segment spans residues 123-143 (LFLTTLPLWVFRLWFRKSVLF). At 144 to 167 (YLPTGVFPYYVERVLAIPFFASGS) the chain is on the lumenal side. Residues 168–184 (VGLTVWMFAVNNVISSV) form a helical membrane-spanning segment. The Cytoplasmic portion of the chain corresponds to 185–229 (LFLLTFPFKPSVPIPIRQTKVEEVVPESAESKESSPEVIDIADAN). Residues 210–219 (PESAESKESS) are compositionally biased toward basic and acidic residues. Positions 210 to 229 (PESAESKESSPEVIDIADAN) are disordered.

It belongs to the WRB/GET1 family. In terms of assembly, component of the Golgi to ER traffic (GET) complex, which is composed of GET1, GET2 and GET3. Within the complex, GET1 and GET2 form a heterotetramer which is stabilized by phosphatidylinositol binding and which binds to the GET3 homodimer.

It localises to the endoplasmic reticulum membrane. The protein localises to the golgi apparatus membrane. Its function is as follows. Required for the post-translational delivery of tail-anchored (TA) proteins to the endoplasmic reticulum. Together with GET2, acts as a membrane receptor for soluble GET3, which recognizes and selectively binds the transmembrane domain of TA proteins in the cytosol. The GET complex cooperates with the HDEL receptor ERD2 to mediate the ATP-dependent retrieval of resident ER proteins that contain a C-terminal H-D-E-L retention signal from the Golgi to the ER. The sequence is that of Golgi to ER traffic protein 1 from Scheffersomyces stipitis (strain ATCC 58785 / CBS 6054 / NBRC 10063 / NRRL Y-11545) (Yeast).